A 393-amino-acid polypeptide reads, in one-letter code: NAD(P)H-quinone oxidoreductase subunit H, chloroplastic (393 aa).

The protein belongs to the complex I 49 kDa subunit family. In terms of assembly, NDH is composed of at least 16 different subunits, 5 of which are encoded in the nucleus.

The protein localises to the plastid. It is found in the chloroplast thylakoid membrane. It catalyses the reaction a plastoquinone + NADH + (n+1) H(+)(in) = a plastoquinol + NAD(+) + n H(+)(out). It carries out the reaction a plastoquinone + NADPH + (n+1) H(+)(in) = a plastoquinol + NADP(+) + n H(+)(out). Its function is as follows. NDH shuttles electrons from NAD(P)H:plastoquinone, via FMN and iron-sulfur (Fe-S) centers, to quinones in the photosynthetic chain and possibly in a chloroplast respiratory chain. The immediate electron acceptor for the enzyme in this species is believed to be plastoquinone. Couples the redox reaction to proton translocation, and thus conserves the redox energy in a proton gradient. The polypeptide is NAD(P)H-quinone oxidoreductase subunit H, chloroplastic (Sorghum bicolor (Sorghum)).